Here is a 164-residue protein sequence, read N- to C-terminus: HTH-type transcriptional regulator IscR (164 aa).

Positions 2-131 constitute an HTH rrf2-type domain; the sequence is RLTSKGRYAV…GSISLEELVK (130 aa). Positions 28 to 51 form a DNA-binding region, H-T-H motif; that stretch reads LADISERQGISLSYLEQLFSRLRK. Positions 92, 98, and 104 each coordinate [2Fe-2S] cluster. A disordered region spans residues 140-164; sequence DRQDSDKRRTPNGRPQETINVNLRA. The span at 152–164 shows a compositional bias: polar residues; sequence GRPQETINVNLRA.

The cofactor is [2Fe-2S] cluster.

In terms of biological role, regulates the transcription of several operons and genes involved in the biogenesis of Fe-S clusters and Fe-S-containing proteins. The polypeptide is HTH-type transcriptional regulator IscR (Xenorhabdus nematophila (strain ATCC 19061 / DSM 3370 / CCUG 14189 / LMG 1036 / NCIMB 9965 / AN6)).